The chain runs to 927 residues: Valine--tRNA ligase (927 aa).

The 'HIGH' region signature appears at 45–55 (PNVTGSLHMGH). Positions 571 to 575 (KMSKS) match the 'KMSKS' region motif. Residue Lys574 coordinates ATP. Residues 856 to 917 (SLIDLAAEAA…EYRDAQDKLA (62 aa)) adopt a coiled-coil conformation.

This sequence belongs to the class-I aminoacyl-tRNA synthetase family. ValS type 1 subfamily. In terms of assembly, monomer.

Its subcellular location is the cytoplasm. The catalysed reaction is tRNA(Val) + L-valine + ATP = L-valyl-tRNA(Val) + AMP + diphosphate. In terms of biological role, catalyzes the attachment of valine to tRNA(Val). As ValRS can inadvertently accommodate and process structurally similar amino acids such as threonine, to avoid such errors, it has a 'posttransfer' editing activity that hydrolyzes mischarged Thr-tRNA(Val) in a tRNA-dependent manner. This Mesorhizobium japonicum (strain LMG 29417 / CECT 9101 / MAFF 303099) (Mesorhizobium loti (strain MAFF 303099)) protein is Valine--tRNA ligase.